The primary structure comprises 120 residues: Large ribosomal subunit protein eL18 (120 aa).

This sequence belongs to the eukaryotic ribosomal protein eL18 family.

This Pyrococcus horikoshii (strain ATCC 700860 / DSM 12428 / JCM 9974 / NBRC 100139 / OT-3) protein is Large ribosomal subunit protein eL18.